The following is a 254-amino-acid chain: MIQLKNVSKIYDNGTVGLKDINLNIDKGEFIVVVGLSGAGKSTLLRSINRLQDVSEGDIIIDGKSITSAKGKDLREIRRDIGMIFQSFNLVKRSSVLRNVLTGRVGYYPTWKTTFNLFTKEDKQKAYEALQRVDLADKVYTRADQLSGGQQQRVAIARVLTQNPKIILADEPTASLDPQTSRRVMHDLKMLNEEYGMTVVANLHSVELAKEFGDRVIGVRAGQIVYDGKMSETSQAVFDDIYNGGNGKKGEEDA.

Residues 2–246 (IQLKNVSKIY…VFDDIYNGGN (245 aa)) enclose the ABC transporter domain. 35-42 (GLSGAGKS) lines the ATP pocket.

Belongs to the ABC transporter superfamily. Phosphonates importer (TC 3.A.1.9.1) family. In terms of assembly, the complex is composed of two ATP-binding proteins (PhnC), two transmembrane proteins (PhnE) and a solute-binding protein (PhnD).

It localises to the cell membrane. The catalysed reaction is phosphonate(out) + ATP + H2O = phosphonate(in) + ADP + phosphate + H(+). Its function is as follows. Part of the ABC transporter complex PhnCDE involved in phosphonates import. Responsible for energy coupling to the transport system. In Lactobacillus johnsonii (strain CNCM I-12250 / La1 / NCC 533), this protein is Phosphonates import ATP-binding protein PhnC.